The following is a 396-amino-acid chain: L-lactate dehydrogenase (396 aa).

The 380-residue stretch at 1–380 (MIISAASDYR…TQDSLVQGLG (380 aa)) folds into the FMN hydroxy acid dehydrogenase domain. Residue Y24 participates in substrate binding. The FMN site is built by S106 and Q127. Y129 lines the substrate pocket. T155 provides a ligand contact to FMN. Position 164 (R164) interacts with substrate. An FMN-binding site is contributed by K251. Residue H275 is the Proton acceptor of the active site. R278 lines the substrate pocket. 306-330 (DSGIRNGLDVVRMIALGADTILLGR) provides a ligand contact to FMN.

The protein belongs to the FMN-dependent alpha-hydroxy acid dehydrogenase family. The cofactor is FMN.

It is found in the cell inner membrane. It catalyses the reaction (S)-lactate + A = pyruvate + AH2. Functionally, catalyzes the conversion of L-lactate to pyruvate. Is coupled to the respiratory chain. The protein is L-lactate dehydrogenase of Escherichia coli O81 (strain ED1a).